The following is a 558-amino-acid chain: 2-isopropylmalate synthase (558 aa).

In terms of domain architecture, Pyruvate carboxyltransferase spans 31–305 (PRWCSTDLRD…YPNLDFSDMR (275 aa)). Mg(2+) contacts are provided by Asp40, His244, His246, and Asn280. The segment at 439 to 558 (NPDDKGQMKL…NACHPLYKEA (120 aa)) is regulatory domain.

The protein belongs to the alpha-IPM synthase/homocitrate synthase family. LeuA type 2 subfamily. Homodimer. The cofactor is Mg(2+).

Its subcellular location is the cytoplasm. The enzyme catalyses 3-methyl-2-oxobutanoate + acetyl-CoA + H2O = (2S)-2-isopropylmalate + CoA + H(+). It functions in the pathway amino-acid biosynthesis; L-leucine biosynthesis; L-leucine from 3-methyl-2-oxobutanoate: step 1/4. Functionally, catalyzes the condensation of the acetyl group of acetyl-CoA with 3-methyl-2-oxobutanoate (2-ketoisovalerate) to form 3-carboxy-3-hydroxy-4-methylpentanoate (2-isopropylmalate). In Marinomonas sp. (strain MWYL1), this protein is 2-isopropylmalate synthase.